The following is a 371-amino-acid chain: tRNA-specific 2-thiouridylase MnmA (371 aa).

ATP contacts are provided by residues 7-14 (AMSGGVDS) and L33. C101 acts as the Nucleophile in catalysis. C101 and C213 form a disulfide bridge. G125 lines the ATP pocket. The interaction with tRNA stretch occupies residues 163-165 (KDQ). The active-site Cysteine persulfide intermediate is the C213.

It belongs to the MnmA/TRMU family.

The protein resides in the cytoplasm. The enzyme catalyses S-sulfanyl-L-cysteinyl-[protein] + uridine(34) in tRNA + AH2 + ATP = 2-thiouridine(34) in tRNA + L-cysteinyl-[protein] + A + AMP + diphosphate + H(+). Its function is as follows. Catalyzes the 2-thiolation of uridine at the wobble position (U34) of tRNA, leading to the formation of s(2)U34. The polypeptide is tRNA-specific 2-thiouridylase MnmA (Roseiflexus castenholzii (strain DSM 13941 / HLO8)).